The primary structure comprises 137 residues: uncharacterized protein (137 aa).

Belongs to the ycf72 family.

The protein localises to the plastid. It localises to the chloroplast. This is an uncharacterized protein from Zea mays (Maize).